A 356-amino-acid polypeptide reads, in one-letter code: UDP-N-acetylglucosamine--N-acetylmuramyl-(pentapeptide) pyrophosphoryl-undecaprenol N-acetylglucosamine transferase (356 aa).

UDP-N-acetyl-alpha-D-glucosamine-binding positions include 12 to 14, asparagine 124, arginine 163, serine 188, isoleucine 242, and glutamine 287; that span reads TGG.

Belongs to the glycosyltransferase 28 family. MurG subfamily.

The protein localises to the cell inner membrane. The catalysed reaction is di-trans,octa-cis-undecaprenyl diphospho-N-acetyl-alpha-D-muramoyl-L-alanyl-D-glutamyl-meso-2,6-diaminopimeloyl-D-alanyl-D-alanine + UDP-N-acetyl-alpha-D-glucosamine = di-trans,octa-cis-undecaprenyl diphospho-[N-acetyl-alpha-D-glucosaminyl-(1-&gt;4)]-N-acetyl-alpha-D-muramoyl-L-alanyl-D-glutamyl-meso-2,6-diaminopimeloyl-D-alanyl-D-alanine + UDP + H(+). It participates in cell wall biogenesis; peptidoglycan biosynthesis. Cell wall formation. Catalyzes the transfer of a GlcNAc subunit on undecaprenyl-pyrophosphoryl-MurNAc-pentapeptide (lipid intermediate I) to form undecaprenyl-pyrophosphoryl-MurNAc-(pentapeptide)GlcNAc (lipid intermediate II). This is UDP-N-acetylglucosamine--N-acetylmuramyl-(pentapeptide) pyrophosphoryl-undecaprenol N-acetylglucosamine transferase from Pseudomonas fluorescens (strain Pf0-1).